Here is a 301-residue protein sequence, read N- to C-terminus: MHKKLAFFSGFVTLGMMLVLIMGGTVTKTDSGDGCGTDWPLCHGKLIPTNPSVETMIEYSHRVVSGIEGLLIIALAIWTFIAVKHRVDVKIFAFLAFIFMLIQSIIGAGAVIWQQSDAILALHFGISLVSFASLLILTILLFEGDREHQVVSRRLRSHLYGLSIYTMIVVYTGAYVRHLGATYACVGWPICEQEVWTFESYVQMGHRVMAGLLVLYTLYVLYLARKEMNRLIERGMMASLFFILLQVGTGAWIVLGGHATYVPLLHAFLITCYFGILSYLSYHAYRSTARQDGAQLKNMNG.

The Cytoplasmic portion of the chain corresponds to 1 to 5 (MHKKL). A helical membrane pass occupies residues 6-26 (AFFSGFVTLGMMLVLIMGGTV). The Extracellular portion of the chain corresponds to 27–62 (TKTDSGDGCGTDWPLCHGKLIPTNPSVETMIEYSHR). A disulfide bridge links Cys-35 with Cys-42. Glu-58 is an active-site residue. A heme o-binding site is contributed by His-61. A helical transmembrane segment spans residues 63–83 (VVSGIEGLLIIALAIWTFIAV). At 84-90 (KHRVDVK) the chain is on the cytoplasmic side. The helical transmembrane segment at 91–111 (IFAFLAFIFMLIQSIIGAGAV) threads the bilayer. At 112-121 (IWQQSDAILA) the chain is on the extracellular side. Residues 122 to 142 (LHFGISLVSFASLLILTILLF) traverse the membrane as a helical segment. His-123 is a heme o binding site. The Cytoplasmic segment spans residues 143–158 (EGDREHQVVSRRLRSH). The helical transmembrane segment at 159-179 (LYGLSIYTMIVVYTGAYVRHL) threads the bilayer. The Extracellular portion of the chain corresponds to 180–203 (GATYACVGWPICEQEVWTFESYVQ). Cys-185 and Cys-191 are joined by a disulfide. A helical transmembrane segment spans residues 204–224 (MGHRVMAGLLVLYTLYVLYLA). Residue His-206 participates in heme b binding. Residues 225–234 (RKEMNRLIER) are Cytoplasmic-facing. The helical transmembrane segment at 235-255 (GMMASLFFILLQVGTGAWIVL) threads the bilayer. At 256-259 (GGHA) the chain is on the extracellular side. A helical membrane pass occupies residues 260-280 (TYVPLLHAFLITCYFGILSYL). Position 266 (His-266) interacts with heme b. Over 281-301 (SYHAYRSTARQDGAQLKNMNG) the chain is Cytoplasmic.

This sequence belongs to the COX15/CtaA family. Type 1 subfamily. Interacts with CtaB. The cofactor is heme b.

The protein resides in the cell membrane. It catalyses the reaction Fe(II)-heme o + 2 A + H2O = Fe(II)-heme a + 2 AH2. It participates in porphyrin-containing compound metabolism; heme A biosynthesis; heme A from heme O: step 1/1. Functionally, catalyzes the conversion of heme O to heme A by two successive hydroxylations of the methyl group at C8. The first hydroxylation forms heme I, the second hydroxylation results in an unstable dihydroxymethyl group, which spontaneously dehydrates, resulting in the formyl group of heme A. This Exiguobacterium sp. (strain ATCC BAA-1283 / AT1b) protein is Heme A synthase.